A 282-amino-acid chain; its full sequence is Bis(5'-nucleosyl)-tetraphosphatase, symmetrical (282 aa).

The protein belongs to the Ap4A hydrolase family.

It catalyses the reaction P(1),P(4)-bis(5'-adenosyl) tetraphosphate + H2O = 2 ADP + 2 H(+). Functionally, hydrolyzes diadenosine 5',5'''-P1,P4-tetraphosphate to yield ADP. In Salmonella arizonae (strain ATCC BAA-731 / CDC346-86 / RSK2980), this protein is Bis(5'-nucleosyl)-tetraphosphatase, symmetrical.